Reading from the N-terminus, the 892-residue chain is MDQPEAPCSSTGPRLAVARELLLAALEELSQEQLKRFRHKLRDVGPDGRSIPWGRLERADAVDLAEQLAQFYGPEPALEVARKTLKRADARDVAAQLQERRLQRLGLGSGTLLSVSEYKKKYREHVLQLHARVKERNARSVKITKRFTKLLIAPESAAPEEAMGPAEEPEPGRARRSDTHTFNRLFRRDEEGRRPLTVVLQGPAGIGKTMAAKKILYDWAAGKLYQGQVDFAFFMPCGELLERPGTRSLADLILDQCPDRGAPVPQMLAQPQRLLFILDGADELPALGGPEAAPCTDPFEAASGARVLGGLLSKALLPTALLLVTTRAAAPGRLQGRLCSPQCAEVRGFSDKDKKKYFYKYFRDERRAERAYRFVKENETLFALCFVPFVCWIVCTVLRQQLELGRDLSRTSKTTTSVYLLFITSVLSSAPVADGPRLQGDLRNLCRLAREGVLGRRAQFAEKELEQLELRGSKVQTLFLSKKELPGVLETEVTYQFIDQSFQEFLAALSYLLEDGGVPRTAAGGVGTLLRGDAQPHSHLVLTTRFLFGLLSAERMRDIERHFGCMVSERVKQEALRWVQGQGQGCPGVAPEVTEGAKGLEDTEEPEEEEEGEEPNYPLELLYCLYETQEDAFVRQALCRFPELALQRVRFCRMDVAVLSYCVRCCPAGQALRLISCRLVAAQEKKKKSLGKRLQASLGGGSSSQGTTKQLPASLLHPLFQAMTDPLCHLSSLTLSHCKLPDAVCRDLSEALRAAPALTELGLLHNRLSEAGLRMLSEGLAWPQCRVQTVRVQLPDPQRGLQYLVGMLRQSPALTTLDLSGCQLPAPMVTYLCAVLQHQGCGLQTLSLASVELSEQSLQELQAVKRAKPDLVITHPALDGHPQPPKELISTF.

Residues 1 to 103 enclose the Pyrin domain; it reads MDQPEAPCSS…AAQLQERRLQ (103 aa). Residues 158–181 are disordered; the sequence is APEEAMGPAEEPEPGRARRSDTHT. Residues 170 to 181 show a composition bias toward basic and acidic residues; it reads EPGRARRSDTHT. The region spanning 196-513 is the NACHT domain; sequence LTVVLQGPAG…EFLAALSYLL (318 aa). Residue 202–209 participates in ATP binding; that stretch reads GPAGIGKT. Residues 352–356 are disordered; that stretch reads KDKKK. The LRR 1 repeat unit spans residues 462-487; sequence EKELEQLELRGSKVQTLFLSKKELPG. Residues 590-614 are disordered; the sequence is APEVTEGAKGLEDTEEPEEEEEGEE. The span at 602 to 614 shows a compositional bias: acidic residues; that stretch reads DTEEPEEEEEGEE. LRR repeat units lie at residues 727–747, 755–778, 811–834, and 845–868; these read LCHLSSLTLSHCKLPDAVCRD, APALTELGLLHNRLSEAGLRMLSE, SPALTTLDLSGCQLPAPMVTYLCA, and TLSLASVELSEQSLQELQAVKRAK.

It belongs to the NLRP family. In terms of assembly, homomultimer; forms the NLRP6 inflammasome polymeric complex, a filament composed of homopolymers in response to pathogens and other damage-associated signals. The core of NLRP6 inflammasomes consists of a signal sensor component (NLRP6), an adapter (PYCARD/ASC), which recruits effector pro-inflammatory caspases (CASP1 and CASP4). Interacts (via pyrin domain) with PYCARD/ASC (via pyrin domain); interaction takes place following NLRP6 activation and formation of liquid-liquid phase separation (LLPS), initiating nucleation which greatly enhances further addition of soluble PYCARD/ASC molecules to the speck in a prion-like polymerization process. Clustered PYCARD/ASC nucleates the formation of CASP1 (or possibly CASP4) filaments through the interaction of their respective CARD domains, acting as a platform for CASP1 polymerization. CASP1 filament formation increases local enzyme concentration, resulting in trans-autocleavage and activation. Active CASP1 then processes IL1B and IL18 precursors, leading to the release of mature cytokines in the extracellular milieu and inflammatory response. Interacts with DHX15. In terms of processing, polyubiquitinated with 'Lys-63'-linked chains, promoting the interaction with PYCARD/ASC and formation of the NLRP6 inflammasome. Deubiquitination by CYLD decreases the interaction with PYCARD/ASC. As to expression, expressed in peripheral blood leukocytes, predominantly in granulocytes and, at lower levels, in CD4(+) and CD8(+) T-cells. Expressed in colonic myofibroblasts (at protein level).

It localises to the cytoplasm. Its subcellular location is the cytosol. The protein localises to the inflammasome. The protein resides in the cell membrane. It is found in the nucleus membrane. Its function is as follows. Acts as the sensor component of the NLRP6 inflammasome, which mediates inflammasome activation in response to various pathogen-associated signals, leading to maturation and secretion of IL1B and IL18. Inflammasomes are supramolecular complexes that assemble in the cytosol in response to pathogens and other damage-associated signals and play critical roles in innate immunity and inflammation. Acts as a recognition receptor (PRR): recognizes and binds specific pathogens and other damage-associated signals, such as lipoteichoic acid (LTA), a cell-wall component of Gram-positive bacteria, or double stranded RNA (dsRNA). May also recognize and bind lipopolysaccharide (LPS), a major component of the outer membrane of Gram-negative bacteria; however, LPS is probably not a major activator of the NLRP6 inflammasome. Following LTA- or dsRNA-binding, NLRP6 undergoes liquid-liquid phase separation (LLPS), enhancing multivalent interactions, an essential step for the formation of the NLRP6 inflammasome polymeric complex. The NLRP6 inflammasome acts by promoting recruitment of effector pro-inflammatory caspases (CASP1 and/or CASP4) that catalyze maturation and secretion of IL1B and IL18 in the extracellular milieu. The NLRP6 inflammasome plays a central role in the maintenance of epithelial integrity and host defense against microbial infections in the intestine. Required to restrict infection against Gram-positive bacteria by recognizing lipoteichoic acid (LTA), leading to recruitment of CASP4 and CASP1, and subsequent maturation and secretion of IL1B and IL18. Involved in intestinal antiviral innate immunity together with DHX15: recognizes and binds viral dsRNA to restrict infection by enteric viruses through the interferon pathway and GSDMD-dependent release of IL18. Required to prevent infection by the apicomplexan parasite Cryptosporidium in enterocytes by promoting GSDMD-dependent release of IL18. The NLRP6 inflammasome may also regulate the gut microbiota composition by acting as a sensor of microbiota-associated metabolites to form a PYCARD/ASC-dependent inflammasome for downstream IL18 release and secretion of antimicrobial peptides. Essential for gut mucosal self-renewal and proliferation. Regulate mucus secretion in an inflammasome- and autophagy-dependent manner to prevent invasion by enteric bacteria,. During systemic bacterial infections, the NLRP6 inflammasome negatively regulates neutrophil recruitment and neutrophil extracellular traps (NETs) formation. May promote peripheral nerve recovery following injury via an inflammasome-independent mechanism. This is NACHT, LRR and PYD domains-containing protein 6 from Homo sapiens (Human).